The sequence spans 243 residues: UPF0758 protein sll0766 (243 aa).

One can recognise an MPN domain in the interval 113 to 235 (VVDSPEAAAI…HQSLRQCTDL (123 aa)). Zn(2+)-binding residues include H184, H186, and D197. Positions 184–197 (HNHPSGGLEPSPED) match the JAMM motif motif.

Belongs to the UPF0758 family.

The chain is UPF0758 protein sll0766 from Synechocystis sp. (strain ATCC 27184 / PCC 6803 / Kazusa).